The sequence spans 862 residues: Taxadiene synthase (862 aa).

The Mg(2+) site is built by Asp613, Asp617, Asn757, Thr761, and Glu765. Positions 613-617 match the DDXXD motif motif; that stretch reads DDMAD.

It belongs to the terpene synthase family. It depends on Mg(2+) as a cofactor.

It catalyses the reaction (2E,6E,10E)-geranylgeranyl diphosphate = taxa-4(5),11(12)-diene + diphosphate. It functions in the pathway alkaloid biosynthesis; taxol biosynthesis; taxa-4(20),11-dien-5alpha-ol from geranylgeranyl diphosphate: step 1/2. In terms of biological role, catalyzes the cyclization of the ubiquitous isoprenoid intermediate geranylgeranyl diphosphate to taxa-4,11-diene, the parent olefin with a taxane skeleton. The protein is Taxadiene synthase (TDC1) of Taxus baccata (English yew).